A 412-amino-acid polypeptide reads, in one-letter code: Multifunctional CCA protein (412 aa).

Residues Gly-8 and Arg-11 each coordinate ATP. CTP-binding residues include Gly-8 and Arg-11. Positions 21 and 23 each coordinate Mg(2+). ATP-binding residues include Arg-91, Arg-137, and Arg-140. Arg-91, Arg-137, and Arg-140 together coordinate CTP. The HD domain occupies 228–329 (TGIHTLMTLS…VKLFDSIDAW (102 aa)).

The protein belongs to the tRNA nucleotidyltransferase/poly(A) polymerase family. Bacterial CCA-adding enzyme type 1 subfamily. Monomer. Can also form homodimers and oligomers. Mg(2+) serves as cofactor. It depends on Ni(2+) as a cofactor.

It catalyses the reaction a tRNA precursor + 2 CTP + ATP = a tRNA with a 3' CCA end + 3 diphosphate. It carries out the reaction a tRNA with a 3' CCA end + 2 CTP + ATP = a tRNA with a 3' CCACCA end + 3 diphosphate. In terms of biological role, catalyzes the addition and repair of the essential 3'-terminal CCA sequence in tRNAs without using a nucleic acid template. Adds these three nucleotides in the order of C, C, and A to the tRNA nucleotide-73, using CTP and ATP as substrates and producing inorganic pyrophosphate. tRNA 3'-terminal CCA addition is required both for tRNA processing and repair. Also involved in tRNA surveillance by mediating tandem CCA addition to generate a CCACCA at the 3' terminus of unstable tRNAs. While stable tRNAs receive only 3'-terminal CCA, unstable tRNAs are marked with CCACCA and rapidly degraded. The chain is Multifunctional CCA protein from Escherichia coli O81 (strain ED1a).